Here is a 495-residue protein sequence, read N- to C-terminus: Keratin, type II cytoskeletal 74 (495 aa).

Positions 1–105 (MASCHTAGHR…DPEIQKVRAQ (105 aa)) are head. The coil 1A stretch occupies residues 106–141 (EREQIKALNDKFASFIDKVRFLEQQNQVLQTKWELL). Residues 106-419 (EREQIKALND…KLLEGEENRM (314 aa)) form the IF rod domain. Residues 142–160 (QQLDLSNCRRNLEPVYEAH) are linker 1. The segment at 161-252 (ISNLRKQLEM…CLYDEEISQL (92 aa)) is coil 1B. A linker 12 region spans residues 253–276 (QTHASETSVILSMDNNRDLDLAGI). Residues 277–415 (IAEVRAHYED…ATYRKLLEGE (139 aa)) are coil 2. The tract at residues 416–495 (ENRMSGENPS…AAGTLARKTT (80 aa)) is tail. Residues 449-495 (DSEAGNAVGSPSTPRNSQSKTRGSSVDPRDAQDESAAAAGTLARKTT) form a disordered region. Positions 457 to 472 (GSPSTPRNSQSKTRGS) are enriched in polar residues.

It belongs to the intermediate filament family. In terms of assembly, heterotetramer of two type I and two type II keratins. As to expression, expressed in epidermis with a particularly strong staining in the nail matrix, nail bed and hyponychium (at protein level).

In terms of biological role, has a role in hair formation. Specific component of keratin intermediate filaments in the inner root sheath (IRS) of the hair follicle. The protein is Keratin, type II cytoskeletal 74 of Mus musculus (Mouse).